Consider the following 346-residue polypeptide: Large ribosomal subunit protein uL1c (346 aa).

Residues 1–70 constitute a chloroplast transit peptide; the sequence is MAACATHSSL…RASNHKFIVS (70 aa). Tyr129 is subject to Phosphotyrosine. The residue at position 177 (Thr177) is a Phosphothreonine. Residue Ser197 is modified to Phosphoserine.

This sequence belongs to the universal ribosomal protein uL1 family. As to quaternary structure, part of the 50S ribosomal subunit.

The protein resides in the plastid. It localises to the chloroplast. Functionally, this protein binds directly to 23S ribosomal RNA. The chain is Large ribosomal subunit protein uL1c (RPL1) from Arabidopsis thaliana (Mouse-ear cress).